The following is an 814-amino-acid chain: Flagellar radial spoke protein 1 (814 aa).

Arg243 carries the post-translational modification Asymmetric dimethylarginine. Residues 283 to 346 are disordered; it reads VQSISTGNRE…PPPPAPKVDP (64 aa). The span at 303–329 shows a compositional bias: acidic residues; the sequence is PEEDEEEEKEEEKEEPEEGEEGEEGEG. Arg428 bears the Asymmetric dimethylarginine mark. 6 MORN repeats span residues 577 to 597, 600 to 622, 623 to 645, 646 to 662, 671 to 685, and 691 to 707; these read YFGS…FATG, YAGE…DGGT, YVGE…DGSV, YTGS…GVYW, GEWK…GTYE, and FEGE…ATYT. The tract at residues 739–769 is disordered; that stretch reads GIPPGSGDEPQLDEEGQPIEDTDKPPLPAHP. Acidic residues predominate over residues 748–758; that stretch reads PQLDEEGQPIE.

Post-translationally, asymmetrically dimethylated at Arg-243 and Arg-428 during flagellum resorption. Probably methylated by PRMT1.

The protein resides in the cytoplasm. It is found in the cytoskeleton. It localises to the flagellum axoneme. Its function is as follows. Flagellar radial spokes contribute to the regulation of dynein arm activity and thus the pattern of flagellar bending. They consist of a thin stalk, which is attached to the a subfiber of the outer doublet microtubule, and a bulbous head, which is attached to the stalk and appears to interact with the projections from the central pair of microtubules. This chain is Flagellar radial spoke protein 1, found in Chlamydomonas reinhardtii (Chlamydomonas smithii).